Reading from the N-terminus, the 549-residue chain is Leiomodin-2 (549 aa).

A tropomyosin-binding region spans residues 1 to 42; sequence MSTFGYRRGLSKYESIDEDELLASLTAEELKELERELEDIEP. The interaction with tropomyosin alpha stretch occupies residues 1–47; that stretch reads MSTFGYRRGLSKYESIDEDELLASLTAEELKELERELEDIEPDRNLP. 3 interaction with actin regions span residues 1–164, 165–499, and 523–542; these read MSTF…PDNS, KPKT…KEIK, and AHEN…LRRV. Residues Ser-11, Ser-15, and Ser-24 each carry the phosphoserine modification. Disordered stretches follow at residues 91–166, 179–200, 358–455, and 469–534; these read KLAE…NSKP, TNGN…HPCG, MDKQ…PGKK, and ESAQ…IRGS. Composition is skewed to acidic residues over residues 95–105 and 113–143; these read EDKEESEEELI and VSEE…EEVT. Polar residues-rich tracts occupy residues 150–163 and 179–192; these read INGT…NPDN and TNGN…NTES. Residues 358–376 are compositionally biased toward basic and acidic residues; sequence MDKQRQKRMQEQKQQEGHD. Over residues 390-401 the composition is skewed to polar residues; the sequence is TPGSSPYASPRQ. Phosphoserine is present on Ser-406. Residues 420-452 show a composition bias toward pro residues; sequence PPSPVAPPPPPPPPPLPPHMLPPPPPPPAPPLP. A coiled-coil region spans residues 457-515; that stretch reads ITRNIAEVIKQQESAQRALQNGQRKKKGKKVKKQPNNILKEIKNSLRSVQEKKMEESSR. Polar residues predominate over residues 469–478; it reads ESAQRALQNG. The span at 479-489 shows a compositional bias: basic residues; it reads QRKKKGKKVKK. The segment covering 496–514 has biased composition (basic and acidic residues); the sequence is KEIKNSLRSVQEKKMEESS. The WH2 domain occupies 523-542; that stretch reads AHENLMEAIRGSSIRQLRRV.

This sequence belongs to the tropomodulin family. In terms of assembly, can bind at least three actin monomers and thereby provides a nucleus for actin filament formation. Interacts (via N-terminus) with tropomyosin alpha (TPM1) (via N-terminus). May also interact with TPM2 (via N-terminus). Interacts with FLII.

The protein resides in the cytoplasm. The protein localises to the myofibril. It is found in the sarcomere. Its subcellular location is the m line. It localises to the cytoskeleton. In terms of biological role, mediates nucleation of actin filaments and thereby promotes actin polymerization. Plays a role in the regulation of actin filament length. Required for normal sarcomere organization in the heart, and for normal heart function. The sequence is that of Leiomodin-2 (Lmod2) from Rattus norvegicus (Rat).